The sequence spans 137 residues: Ribosome-binding factor A (137 aa).

It belongs to the RbfA family. In terms of assembly, monomer. Binds 30S ribosomal subunits, but not 50S ribosomal subunits or 70S ribosomes.

It is found in the cytoplasm. Functionally, one of several proteins that assist in the late maturation steps of the functional core of the 30S ribosomal subunit. Associates with free 30S ribosomal subunits (but not with 30S subunits that are part of 70S ribosomes or polysomes). Required for efficient processing of 16S rRNA. May interact with the 5'-terminal helix region of 16S rRNA. The protein is Ribosome-binding factor A of Trichodesmium erythraeum (strain IMS101).